The following is an 88-amino-acid chain: Translation initiation factor IF-1 3 (88 aa).

The 72-residue stretch at 1-72 (MAKEELLELD…TKGCINFRHK (72 aa)) folds into the S1-like domain.

The protein belongs to the IF-1 family. Component of the 30S ribosomal translation pre-initiation complex which assembles on the 30S ribosome in the order IF-2 and IF-3, IF-1 and N-formylmethionyl-tRNA(fMet); mRNA recruitment can occur at any time during PIC assembly.

The protein localises to the cytoplasm. One of the essential components for the initiation of protein synthesis. Stabilizes the binding of IF-2 and IF-3 on the 30S subunit to which N-formylmethionyl-tRNA(fMet) subsequently binds. Helps modulate mRNA selection, yielding the 30S pre-initiation complex (PIC). Upon addition of the 50S ribosomal subunit IF-1, IF-2 and IF-3 are released leaving the mature 70S translation initiation complex. The chain is Translation initiation factor IF-1 3 from Burkholderia orbicola (strain AU 1054).